A 731-amino-acid chain; its full sequence is Auxin response factor 3 (731 aa).

The span at 1 to 22 (MASSASSSSSPSSRPPLMALPS) shows a compositional bias: low complexity. The interval 1–41 (MASSASSSSSPSSRPPLMALPSFYRPPWPSERGGEQRATDC) is disordered. Residues 191-293 (FCKTLTASDT…ELRLGVRRAT (103 aa)) constitute a DNA-binding region (TF-B3).

It belongs to the ARF family. Homo and heterodimers. As to expression, expressed in roots, culms, leaves and young panicles.

Its subcellular location is the nucleus. Its function is as follows. Auxin response factors (ARFs) are transcriptional factors that bind specifically to the DNA sequence 5'-TGTCTC-3' found in the auxin-responsive promoter elements (AuxREs). The polypeptide is Auxin response factor 3 (ARF3) (Oryza sativa subsp. japonica (Rice)).